A 356-amino-acid polypeptide reads, in one-letter code: MADFFASSFWTGFLWPLIIMIAQSVLLLVVLLIAIAYILLADRKIWAAVQIRRGPNVVGPFGLFQSFADLLKFVLKEPIIPAGANKGVFLLAPLVSCVLALAAWAVIPTNLGWAIADINVGILFIFAISSLSIYGIIMAGWSSNSKYPFLAALRSAAQMVSYEVSIGFVIITVLLCAGTLNLSAVVEAQHARGLASLIGLPQLTILNWYVWPLFPMFVVFYVSALAETNRPPFDLVEAESELVAGFMVEYGSTPYLLFMLGEYVAITTMCALATILFLGGWLPPIDVAPFNWVPGVIWFALKLFFMFFLIAMAKAIVPRYRYDQLMRLGWKVFLPLSLVMVVVVAGVLHFAGIAPK.

The next 8 membrane-spanning stretches (helical) occupy residues 18-38 (IIMIAQSVLLLVVLLIAIAYI), 87-107 (GVFLLAPLVSCVLALAAWAVI), 120-140 (VGILFIFAISSLSIYGIIMAG), 166-186 (IGFVIITVLLCAGTLNLSAVV), 205-225 (ILNWYVWPLFPMFVVFYVSAL), 265-285 (AITTMCALATILFLGGWLPPI), 292-312 (WVPGVIWFALKLFFMFFLIAM), and 333-353 (FLPLSLVMVVVVAGVLHFAGI).

Belongs to the complex I subunit 1 family. As to quaternary structure, NDH-1 is composed of 14 different subunits. Subunits NuoA, H, J, K, L, M, N constitute the membrane sector of the complex.

The protein resides in the cell inner membrane. It catalyses the reaction a quinone + NADH + 5 H(+)(in) = a quinol + NAD(+) + 4 H(+)(out). In terms of biological role, NDH-1 shuttles electrons from NADH, via FMN and iron-sulfur (Fe-S) centers, to quinones in the respiratory chain. The immediate electron acceptor for the enzyme in this species is believed to be ubiquinone. Couples the redox reaction to proton translocation (for every two electrons transferred, four hydrogen ions are translocated across the cytoplasmic membrane), and thus conserves the redox energy in a proton gradient. This subunit may bind ubiquinone. This chain is NADH-quinone oxidoreductase subunit H, found in Bradyrhizobium sp. (strain ORS 278).